A 357-amino-acid chain; its full sequence is P2Y purinoceptor 8 (357 aa).

Residues 1-26 (MVKNGSHLDAETLAMLQNKAISITLP) lie on the Extracellular side of the membrane. An N-linked (GlcNAc...) asparagine glycan is attached at Asn-4. The chain crosses the membrane as a helical span at residues 27-47 (VVYTMVAIISIPGNFFSLWVL). The Cytoplasmic portion of the chain corresponds to 48–56 (CWHIKPKTP). Residues 57-77 (SVIFMINLSITDLLLACCFPF) form a helical membrane-spanning segment. Residues 78 to 97 (QIFYHIQRNHWIFGKTLCSL) are Extracellular-facing. Cys-95 and Cys-174 are oxidised to a cystine. The chain crosses the membrane as a helical span at residues 98–118 (VTVMFYSNMYSSILTMTCISI). The Cytoplasmic segment spans residues 119-137 (ERYMGVVYPMKLIKWRRKR). A helical transmembrane segment spans residues 138 to 158 (YALGACVIMWIFLLLAFYPLE). Over 159 to 185 (STDLTYEVKELGIITCFDVLKWEMLPN) the chain is Extracellular. The helical transmembrane segment at 186 to 206 (FAAWVAFLLTLFVVLFLIPFI) threads the bilayer. Residues 207–236 (VTVGCYIGTIRKLIQTSSRYGNKQKTRSIY) lie on the Cytoplasmic side of the membrane. Residues 237 to 257 (LAIIVLSVFITCFAPNNFILL) traverse the membrane as a helical segment. The Extracellular segment spans residues 258–271 (AHMIVRLFYEGSLY). A helical membrane pass occupies residues 272–294 (PAYKLTLCLSCLNNCIDPFIYYF). Residues 295-357 (ASKEFYQKFM…ICLQRQESVF (63 aa)) lie on the Cytoplasmic side of the membrane.

The protein belongs to the G-protein coupled receptor 1 family.

It localises to the cell membrane. Functionally, probable receptor for purines coupled to G-proteins. In Gallus gallus (Chicken), this protein is P2Y purinoceptor 8 (P2RY8).